A 289-amino-acid chain; its full sequence is MYG1 protein CT_386 (289 aa).

This sequence belongs to the MYG1 family.

This is MYG1 protein CT_386 from Chlamydia trachomatis serovar D (strain ATCC VR-885 / DSM 19411 / UW-3/Cx).